A 331-amino-acid chain; its full sequence is Beta-hexosaminidase (331 aa).

Substrate is bound by residues Asp60, Arg68, Arg133, and 163–164 (KH). The Proton donor/acceptor role is filled by His176. The Nucleophile role is filled by Asp247.

The protein belongs to the glycosyl hydrolase 3 family. NagZ subfamily.

The protein resides in the cytoplasm. It carries out the reaction Hydrolysis of terminal non-reducing N-acetyl-D-hexosamine residues in N-acetyl-beta-D-hexosaminides.. Its pathway is cell wall biogenesis; peptidoglycan recycling. Its function is as follows. Plays a role in peptidoglycan recycling by cleaving the terminal beta-1,4-linked N-acetylglucosamine (GlcNAc) from peptide-linked peptidoglycan fragments, giving rise to free GlcNAc, anhydro-N-acetylmuramic acid and anhydro-N-acetylmuramic acid-linked peptides. The protein is Beta-hexosaminidase of Xanthomonas campestris pv. campestris (strain B100).